The chain runs to 384 residues: S-adenosylmethionine synthase (384 aa).

H15 is an ATP binding site. D17 contacts Mg(2+). Position 43 (E43) interacts with K(+). L-methionine contacts are provided by E56 and Q99. Positions Q99 to R109 are flexible loop. ATP-binding positions include D164–K166, R230–F231, D239, R245–K246, A262, and K266. Residue D239 participates in L-methionine binding. Position 270 (K270) interacts with L-methionine.

It belongs to the AdoMet synthase family. Homotetramer; dimer of dimers. Mg(2+) serves as cofactor. The cofactor is K(+).

Its subcellular location is the cytoplasm. It catalyses the reaction L-methionine + ATP + H2O = S-adenosyl-L-methionine + phosphate + diphosphate. It functions in the pathway amino-acid biosynthesis; S-adenosyl-L-methionine biosynthesis; S-adenosyl-L-methionine from L-methionine: step 1/1. Catalyzes the formation of S-adenosylmethionine (AdoMet) from methionine and ATP. The overall synthetic reaction is composed of two sequential steps, AdoMet formation and the subsequent tripolyphosphate hydrolysis which occurs prior to release of AdoMet from the enzyme. The sequence is that of S-adenosylmethionine synthase from Escherichia coli (strain K12 / DH10B).